Reading from the N-terminus, the 396-residue chain is dTDP-epi-vancosaminyltransferase (396 aa).

10 to 12 provides a ligand contact to dTDP-beta-L-4-epi-vancosamine; that stretch reads SRG. The devancoaminyl-vancomycin site is built by D127, Q133, Y141, and Y169. DTDP-beta-L-4-epi-vancosamine-binding positions include R207, S230, 277 to 278, and 293 to 298; these read EV and HDSAGT.

It belongs to the glycosyltransferase 28 family.

It carries out the reaction dTDP-beta-L-4-epi-vancosamine + devancoaminyl-vancomycin = chloroorienticin B + dTDP + H(+). It participates in antibiotic biosynthesis; vancomycin biosynthesis. Its function is as follows. Catalyzes the attachment of 4-epi-vancosamine from a TDP donor to the beta-OH-Tyr-6 of the aglycone cosubstrate in the biosynthesis of glycopeptide antibiotic chloroeremomycin, a member of the vancomycin group of antibiotics. Strongly prefers devancoaminyl-vancomycin (DVV) as substrate rather than the heptapeptide vancomycin aglycone (AGV). Acts downstream of GtfB. This Amycolatopsis orientalis (Nocardia orientalis) protein is dTDP-epi-vancosaminyltransferase (gtfA).